Reading from the N-terminus, the 140-residue chain is Large ribosomal subunit protein mL43 (140 aa).

This sequence belongs to the mitochondrion-specific ribosomal protein mL43 family. As to quaternary structure, component of the mitochondrial large ribosomal subunit (mt-LSU). Mature yeast 74S mitochondrial ribosomes consist of a small (37S) and a large (54S) subunit. The 37S small subunit contains a 15S ribosomal RNA (15S mt-rRNA) and 34 different proteins. The 54S large subunit contains a 21S rRNA (21S mt-rRNA) and 46 different proteins.

It localises to the mitochondrion. Component of the mitochondrial ribosome (mitoribosome), a dedicated translation machinery responsible for the synthesis of mitochondrial genome-encoded proteins, including at least some of the essential transmembrane subunits of the mitochondrial respiratory chain. The mitoribosomes are attached to the mitochondrial inner membrane and translation products are cotranslationally integrated into the membrane. Also has an extraribosomal function, being essential for mitochondrial genome integrity. May interact with MHR1 to take part in the mtDNA repair mechanism. The protein is Large ribosomal subunit protein mL43 (MRPL51) of Saccharomyces cerevisiae (strain ATCC 204508 / S288c) (Baker's yeast).